Reading from the N-terminus, the 73-residue chain is Large ribosomal subunit protein bL31 (73 aa).

This sequence belongs to the bacterial ribosomal protein bL31 family. Type A subfamily. Part of the 50S ribosomal subunit.

Its function is as follows. Binds the 23S rRNA. The chain is Large ribosomal subunit protein bL31 from Mesorhizobium japonicum (strain LMG 29417 / CECT 9101 / MAFF 303099) (Mesorhizobium loti (strain MAFF 303099)).